The following is a 99-amino-acid chain: Putative GIY-YIG domain-containing protein 242L (99 aa).

The region spanning Asn5–Gln81 is the GIY-YIG domain.

This Invertebrate iridescent virus 6 (IIV-6) protein is Putative GIY-YIG domain-containing protein 242L.